Reading from the N-terminus, the 252-residue chain is tRNA (guanine-N(1)-)-methyltransferase (252 aa).

S-adenosyl-L-methionine contacts are provided by residues glycine 113 and 133–138 (IGDYVL).

This sequence belongs to the RNA methyltransferase TrmD family. In terms of assembly, homodimer.

It is found in the cytoplasm. The enzyme catalyses guanosine(37) in tRNA + S-adenosyl-L-methionine = N(1)-methylguanosine(37) in tRNA + S-adenosyl-L-homocysteine + H(+). Functionally, specifically methylates guanosine-37 in various tRNAs. The polypeptide is tRNA (guanine-N(1)-)-methyltransferase (Baumannia cicadellinicola subsp. Homalodisca coagulata).